The following is a 183-amino-acid chain: Ribosome maturation factor RimM (183 aa).

The 77-residue stretch at 95-171 (DPDEFYDHEL…VVVIDPPEGL (77 aa)) folds into the PRC barrel domain.

Belongs to the RimM family. Binds ribosomal protein uS19.

Its subcellular location is the cytoplasm. Functionally, an accessory protein needed during the final step in the assembly of 30S ribosomal subunit, possibly for assembly of the head region. Essential for efficient processing of 16S rRNA. May be needed both before and after RbfA during the maturation of 16S rRNA. It has affinity for free ribosomal 30S subunits but not for 70S ribosomes. In Rhodococcus opacus (strain B4), this protein is Ribosome maturation factor RimM.